Reading from the N-terminus, the 1349-residue chain is Periaxin (1349 aa).

Serine 7 carries the post-translational modification Phosphoserine. A PDZ domain is found at leucine 16–threonine 99. The short motif at valine 70–leucine 84 is the Nuclear export signal element. Phosphoserine is present on serine 133. 41 repeat units span residues proline 402 to lysine 406, glycine 410 to lysine 414, valine 418 to lysine 422, methionine 426 to valine 430, leucine 431 to arginine 435, leucine 436 to glutamate 440, valine 444 to lysine 448, valine 452 to alanine 456, valine 457 to arginine 461, leucine 462 to glutamine 466, leucine 467 to proline 471, glutamate 472 to proline 476, glutamate 477 to proline 481, glutamate 485 to proline 489, leucine 493 to glutamine 497, valine 501 to lysine 505, leucine 506 to lysine 510, valine 514 to alanine 518, valine 519 to arginine 523, leucine 524 to glutamine 528, valine 532 to lysine 536, leucine 537 to lysine 549, valine 553 to alanine 557, valine 558 to arginine 562, leucine 563 to glutamine 567, valine 571 to lysine 575, leucine 576 to lysine 580, valine 589 to alanine 593, valine 594 to histidine 598, leucine 599 to glutamine 603, valine 612 to lysine 616, leucine 617 to lysine 621, leucine 622 to lysine 626, valine 630 to valine 634, valine 635 to histidine 639, valine 643 to lysine 647, valine 648 to arginine 652, leucine 653 to glutamine 657, valine 661 to histidine 665, alanine 669 to lysine 673, and leucine 674 to proline 678. The tract at residues proline 402–proline 678 is 41 X 5 AA approximate tandem repeats of [LVMGIE]-[PSM]-[EDKA]-[LIVMA]-[AQKHPRT]; that may have a tripeptide spacer of [ALKD]-[IPV]-[KPH]. A phosphoserine mark is found at serine 794 and serine 974. Residues alanine 1207–lysine 1218 show a composition bias toward basic and acidic residues. The interval alanine 1207–isoleucine 1349 is disordered. The segment covering serine 1232–serine 1242 has biased composition (low complexity). Residues serine 1236, serine 1240, serine 1242, serine 1289, serine 1295, and serine 1327 each carry the phosphoserine modification.

This sequence belongs to the periaxin family. In terms of assembly, homodimer (via PDZ domain). Interacts with SCN10A. Found in a complex with SCN10A. Interacts with DRP2. Identified in a dystroglycan complex that contains at least PRX, DRP2, UTRN, DMD and DAG1. Detected in a complex composed of at least EZR, AHNAK, PPL and PRX. Identified in a complex with EZR, AHNAK, BFSP1, BFSP2, ANK2, PLEC, VIM and spectrin. In terms of tissue distribution, detected in eye lens (at protein level).

It is found in the nucleus. Its subcellular location is the cytoplasm. It localises to the cell membrane. The protein localises to the cell junction. The protein resides in the adherens junction. Scaffolding protein that functions as part of a dystroglycan complex in Schwann cells, and as part of EZR and AHNAK-containing complexes in eye lens fiber cells. Required for the maintenance of the peripheral myelin sheath that is essential for normal transmission of nerve impulses and normal perception of sensory stimuli. Required for normal transport of MBP mRNA from the perinuclear to the paranodal regions. Required for normal remyelination after nerve injury. Required for normal elongation of Schwann cells and normal length of the internodes between the nodes of Ranvier. The demyelinated nodes of Ranvier permit saltatory transmission of nerve impulses; shorter internodes cause slower transmission of nerve impulses. Required for the formation of appositions between the abaxonal surface of the myelin sheath and the Schwann cell plasma membrane; the Schwann cell cytoplasm is restricted to regions between these appositions. Required for the formation of Cajal bands and of Schmidt-Lanterman incisures that correspond to short, cytoplasm-filled regions on myelinated nerves. Recruits DRP2 to the Schwann cell plasma membrane. Required for normal protein composition of the eye lens fiber cell plasma membrane and normal eye lens fiber cell morphology. The sequence is that of Periaxin (PRX) from Bos taurus (Bovine).